The sequence spans 141 residues: ATP synthase epsilon chain (141 aa).

This sequence belongs to the ATPase epsilon chain family. In terms of assembly, F-type ATPases have 2 components, CF(1) - the catalytic core - and CF(0) - the membrane proton channel. CF(1) has five subunits: alpha(3), beta(3), gamma(1), delta(1), epsilon(1). CF(0) has three main subunits: a, b and c.

The protein resides in the cell inner membrane. Produces ATP from ADP in the presence of a proton gradient across the membrane. In Pseudomonas fluorescens (strain ATCC BAA-477 / NRRL B-23932 / Pf-5), this protein is ATP synthase epsilon chain.